The primary structure comprises 529 residues: Snake venom 5'-nucleotidase (529 aa).

Residue G1 is a signal peptide. Positions 12 and 14 each coordinate Zn(2+). C27 and C32 are oxidised to a cystine. The Zn(2+) site is built by D60, N92, H195, and H218. N-linked (GlcNAc...) asparagine glycosylation is found at N308 and N322. 2 disulfide bridges follow: C328–C333 and C340–C362. Position 329 (R329) interacts with AMP. AMP-binding residues include N365, R370, and F393. C452 and C455 are disulfide-bonded. 2 residues coordinate AMP: F476 and D482. Residue S525 is the site of GPI-anchor amidated serine attachment. The propeptide at 526-529 (AGSL) is removed in mature form.

This sequence belongs to the 5'-nucleotidase family. Requires Zn(2+) as cofactor. In terms of processing, venom 5'-nucleotidases (or a part thereof) may be released into the venom via exosome-like vesicles. They may be attached via a GPI anchor to the membrane of these vesicles. Soluble forms of 5'-nucleotidase might be released by cleavage of the ectodomain in the exosome-like vesicles or venom gland cells. As to expression, expressed by the venom gland.

Its subcellular location is the membrane. The enzyme catalyses a ribonucleoside 5'-phosphate + H2O = a ribonucleoside + phosphate. Hydrolyzes nucleotides into nucleosides. Snake venom 5'-nucleotidases are widely distributed among venomous snake taxa, but there is a lack of information about their biological activities. They have been shown to inhibit platelet aggregation. This effect may be due to the liberation of inhibitory AMP or adenosine by its action on ADP released upon initiation of aggregation. Venom 5'-nucleotidases are also known to synergistically act in vivo with other toxins like ADPases, phospholipases, and disintegrins to exert a more pronounced anti-coagulant effect. The polypeptide is Snake venom 5'-nucleotidase (Naja atra (Chinese cobra)).